We begin with the raw amino-acid sequence, 1369 residues long: MSVPVAPKKSCYTQLRDNRNAARNNNESILSLGDTNANQIMLEVSSSHDESKTCDLGDEIGNTNSSEPENRTHFHKEFHQLQGFGKGSQAGSASLKDFRLSSTIQRELNEEHTVERGTDSLQTTRSIQGPSLSSWRNVMSEASLDVLAKRDAEIPRHVPKDKLAKTLDNEELRRHSLERASSSVAAVGSLTPQHPQPLSLDSREARGQIPGGGEGPQKTLPDHAVPAAFPATDSTSEGKSVRHPKPSTSESKQSTPSETQTVGAHVLQVCSEHTSHSAHPEPALNLTLASKEIPSKLEAQLGQGKGEAKLDLKYVPPRRVEQEGKAAQEGYLGCHKEENLSALEGRDPCGEAHPEATDALGHLLNSDLHHLGVGRGNCEEKRGVNPGEQDSLHTTPKQGSASLGGADNQPTGKISPCAGEKLGERTSSSFSPGDSHVAFIPNNLTDSKPLDVIEEERRLGSGNKDSVMVLVFNPSVGENKTEVPEPLDPQSGRSEARESKEVTTSVAENRNLLENADKIESTSARADSVLNIPAPLHPETTVNMTYQPTTPSSSFQDVSVFGMDAGSPLVVPPPTDSARLLNTSPKVPDKNTCPSGIPKPVFTHSKDTPSSQEGMENYQVEKTEERTETKPIIMPKPKHVRPKIITYIRRNPQALGQVDASLVPVGLPYAPPTCTMPLPHEEKAAGGDLKPSANLYEKFKPDLQKPRVFSSGLMVSGIKPPGHPFSQMSEKFLQEVTDHPGKEEFCSPPYAHYEVPPTFYRSAMLLKPQLGLGAMSRLPSAKSRILIASQRSSASAIHPPGPITTATSLYSSDPSADLKKASSSNAAKSNLPKSGLRPPGYSRLPAAKLAAFGFVRSSSVSSVSSTQSGDSAQPEQGRPATRSTFGNEEQPVLKASLPSKDTPKGAGRVAPPASSSVTAPRRSLLPAPKSTSTPAGTKKDAQKDQDTNKPAVSSPKRVAASTTKLHSPGYPKQRTAAARNGFPPKPDPQAREAERQLVLRLKERCEQQTRQLGVAQGELKRAICGFDALAVATQHFFRKNESALVKEKELSIELANIRDEVAFHTAKCEKLQKEKEELERRFEDEVKRLGWQQQAELQELEERLQLQFEAEMARLQEEHGDQLLSIRCQHQEQVEDLTASHDAALLEMENNHTVAITILQDDHDHKVQELMSTHELEKKELEENFEKLRLSLQDQVDTLTFQSQSLRDRARRFEEALRKNTEEQLEIALAPYQHLEEDMKSLKQVLEMKNQQIHEQEKKILELEKLAEKNIILEEKIQVLQQQNEDLKARIDQNTVVTRQLSEENANLQEYVEKETQEKKRLSRTNEELLWKLQTGDPTSPIKLSPTSPVYRGSSSGPSSPARVSTTPR.

7 disordered regions span residues 180-262 (ASSS…TQTV), 374-442 (GRGN…FIPN), 477-509 (GENKTEVPEPLDPQSGRSEARESKEVTTSVAEN), 582-627 (NTSP…EERT), 791-839 (RSSA…LRPP), 861-992 (SSVS…QARE), and 1331-1369 (WKLQTGDPTSPIKLSPTSPVYRGSSSGPSSPARVSTTPR). Polar residues-rich tracts occupy residues 246–262 (PSTSESKQSTPSETQTV) and 392–401 (LHTTPKQGSA). The mediates interaction with MAPRE1 stretch occupies residues 641-980 (RPKIITYIRR…PKQRTAAARN (340 aa)). A sufficient for interaction with KIF2C region spans residues 801–890 (GPITTATSLY…TRSTFGNEEQ (90 aa)). The interval 801 to 1150 (GPITTATSLY…HDAALLEMEN (350 aa)) is localization to the growing distal tip of microtubules. The span at 804 to 814 (TTATSLYSSDP) shows a compositional bias: polar residues. Positions 821–834 (ASSSNAAKSNLPKS) are enriched in low complexity. Residues 937 to 947 (TKKDAQKDQDT) show a composition bias toward basic and acidic residues. A coiled-coil region spans residues 991 to 1335 (REAERQLVLR…NEELLWKLQT (345 aa)). Residues 1348–1369 (SPVYRGSSSGPSSPARVSTTPR) are compositionally biased toward low complexity.

The protein in the C-terminal section; belongs to the MTUS1 family. In terms of assembly, homodimer. Interacts with KIF2C and MAPRE1; the interaction is direct and probably targets MTUS2 and KIF2C to microtubules. In terms of tissue distribution, detected in embryonic stem cells differentiating to cardiomyocytes.

The protein localises to the cytoplasm. It is found in the cytoskeleton. Its function is as follows. Binds microtubules. Together with MAPRE1 may target the microtubule depolymerase KIF2C to the plus-end of microtubules. May regulate the dynamics of microtubules at their growing distal tip. The protein is Microtubule-associated tumor suppressor candidate 2 (MTUS2) of Homo sapiens (Human).